Here is a 195-residue protein sequence, read N- to C-terminus: Holliday junction branch migration complex subunit RuvA (195 aa).

A domain I region spans residues 1 to 63 (MIASVRGEVL…EDSQTLYGFA (63 aa)). A domain II region spans residues 64–138 (DSDARDLFLT…DKVGSSTSSG (75 aa)). A flexible linker region spans residues 138 to 142 (GVAAA). Positions 143–195 (GGHGIRGPVVEALVGLGFAVKQAEEATDKVLANDPEATTSSALRAALSMLGKK) are domain III.

It belongs to the RuvA family. As to quaternary structure, homotetramer. Forms an RuvA(8)-RuvB(12)-Holliday junction (HJ) complex. HJ DNA is sandwiched between 2 RuvA tetramers; dsDNA enters through RuvA and exits via RuvB. An RuvB hexamer assembles on each DNA strand where it exits the tetramer. Each RuvB hexamer is contacted by two RuvA subunits (via domain III) on 2 adjacent RuvB subunits; this complex drives branch migration. In the full resolvosome a probable DNA-RuvA(4)-RuvB(12)-RuvC(2) complex forms which resolves the HJ.

Its subcellular location is the cytoplasm. Its function is as follows. The RuvA-RuvB-RuvC complex processes Holliday junction (HJ) DNA during genetic recombination and DNA repair, while the RuvA-RuvB complex plays an important role in the rescue of blocked DNA replication forks via replication fork reversal (RFR). RuvA specifically binds to HJ cruciform DNA, conferring on it an open structure. The RuvB hexamer acts as an ATP-dependent pump, pulling dsDNA into and through the RuvAB complex. HJ branch migration allows RuvC to scan DNA until it finds its consensus sequence, where it cleaves and resolves the cruciform DNA. This Mycolicibacterium gilvum (strain PYR-GCK) (Mycobacterium gilvum (strain PYR-GCK)) protein is Holliday junction branch migration complex subunit RuvA.